Reading from the N-terminus, the 473-residue chain is Glycine--tRNA ligase (473 aa).

Arg101 and Glu172 together coordinate substrate. Residues 204 to 206 (RNE), 214 to 219 (FRTREF), 289 to 290 (EL), and 333 to 336 (GVER) contribute to the ATP site. 219-223 (FEQME) contributes to the substrate binding site. 329-333 (EPSVG) is a binding site for substrate.

Belongs to the class-II aminoacyl-tRNA synthetase family. As to quaternary structure, homodimer.

It localises to the cytoplasm. It carries out the reaction tRNA(Gly) + glycine + ATP = glycyl-tRNA(Gly) + AMP + diphosphate. Catalyzes the attachment of glycine to tRNA(Gly). This is Glycine--tRNA ligase from Ureaplasma urealyticum serovar 10 (strain ATCC 33699 / Western).